We begin with the raw amino-acid sequence, 389 residues long: MSWWWARSLGAQKEFKENGALTSYQSVGLIIGVTGIVGNSLAEILPLPDTPGGPWKVYGVARRPRPAWNTDHPIEYIQCDVASTEDTLAKLSPLTNITHIFYVAWTGSEDCEVNETMFHNVLKAVIPNAPNLRHICIQTGIKHYTGPLDPDGGIQPHDSPFTEDLPRLNAPNFYHNLEDILIEEAAKKKGLTWSVHRPALVFGFSPYSMMNIIGALSVYAVICKHENKPLIYHGAPDNSRDSWNVYADAADADLIAEHQIWAAVDSNAKNEVFNCSNGDVFKWKQMWKILAEQFEVELVGYEDGQKRMSLQERMKGKGPVWDEIVRKHKLLPTKLEDVAQWWFADIVSQSQNLVNGVNKSKENGFLGFRDSKKSFVYWIKKMRAAKIIP.

NADP(+) contacts are provided by residues 34 to 36 (TGI), 62 to 63 (RR), 80 to 81 (DV), 104 to 105 (AW), and Q138. Catalysis depends on residues K142 and Y174. The substrate site is built by K142 and Y174. Residues Y174, V201, and 208 to 210 (SMM) contribute to the NADP(+) site. Residue S350 participates in substrate binding.

It belongs to the short-chain dehydrogenases/reductases (SDR) family. Highly divergent.

It carries out the reaction (S)-8-oxocitronellyl enol + NADP(+) = (6E)-8-oxogeranial + NADPH + H(+). The catalysed reaction is (S)-8-oxocitronellyl enol + NAD(+) = (6E)-8-oxogeranial + NADH + H(+). Functionally, iridoid synthase that catalyzes the first step in generation of the iridoid ring scaffold using the linear monoterpene (6E)-8-oxogeranial as substrate. Iridoids comprise a large family of distinctive bicyclic monoterpenes that possess a wide range of pharmacological activities, including anticancer, anti-inflammatory, antifungal and antibacterial activities. In Camptotheca acuminata (Happy tree), this protein is (S)-8-oxocitronellyl enol synthase CYC1.